A 536-amino-acid polypeptide reads, in one-letter code: Phosphoenolpyruvate carboxykinase (ATP) (536 aa).

R62, Y203, and K209 together coordinate substrate. ATP is bound by residues K209, H228, and 244-252 (GLSGTGKTT). Positions 209 and 228 each coordinate Mn(2+). Mn(2+) is bound at residue D265. ATP is bound by residues E293, R329, 445-446 (RI), and T451. R329 lines the substrate pocket.

This sequence belongs to the phosphoenolpyruvate carboxykinase (ATP) family. Monomer. Mn(2+) is required as a cofactor.

The protein resides in the cytoplasm. It catalyses the reaction oxaloacetate + ATP = phosphoenolpyruvate + ADP + CO2. It functions in the pathway carbohydrate biosynthesis; gluconeogenesis. Involved in the gluconeogenesis. Catalyzes the conversion of oxaloacetate (OAA) to phosphoenolpyruvate (PEP) through direct phosphoryl transfer between the nucleoside triphosphate and OAA. The polypeptide is Phosphoenolpyruvate carboxykinase (ATP) (Actinobacillus pleuropneumoniae serotype 5b (strain L20)).